A 389-amino-acid chain; its full sequence is Chalcone synthase J (389 aa).

Residue Cys-164 is part of the active site.

It belongs to the thiolase-like superfamily. Chalcone/stilbene synthases family.

The enzyme catalyses (E)-4-coumaroyl-CoA + 3 malonyl-CoA + 3 H(+) = 2',4,4',6'-tetrahydroxychalcone + 3 CO2 + 4 CoA. Its pathway is secondary metabolite biosynthesis; flavonoid biosynthesis. In terms of biological role, the primary product of this enzyme is 4,2',4',6'-tetrahydroxychalcone (also termed naringenin-chalcone or chalcone) which can under specific conditions spontaneously isomerize into naringenin. The sequence is that of Chalcone synthase J (CHSJ) from Petunia hybrida (Petunia).